Here is a 612-residue protein sequence, read N- to C-terminus: Alpha-glycerophosphate oxidase (612 aa).

21-49 contributes to the FAD binding site; sequence DLLIIGGGITGAGVALQAAASGLDTGLIE. The segment covering 399–408 has biased composition (basic and acidic residues); that stretch reads ETSTSEKELD. The interval 399–418 is disordered; the sequence is ETSTSEKELDPSAVSRGSSF.

This sequence belongs to the FAD-dependent glycerol-3-phosphate dehydrogenase family. It depends on FAD as a cofactor.

The protein localises to the cytoplasm. The enzyme catalyses sn-glycerol 3-phosphate + O2 = dihydroxyacetone phosphate + H2O2. In Streptococcus pyogenes serotype M1, this protein is Alpha-glycerophosphate oxidase (glpO).